A 1274-amino-acid polypeptide reads, in one-letter code: RNA-directed RNA polymerase VP2 (1274 aa).

The region spanning 561 to 798 (LSTTSGSVVT…KLYALMGCRI (238 aa)) is the RdRp catalytic domain.

This sequence belongs to the reoviridae RNA-directed RNA polymerase family.

Its subcellular location is the virion. It carries out the reaction RNA(n) + a ribonucleoside 5'-triphosphate = RNA(n+1) + diphosphate. RNA-directed RNA polymerase that is involved in transcription and genome replication. Following infection, it catalyzes the synthesis of fully conservative plus strands. After core assembly, which consists in recruitment of one capped plus-strand for each genomic segments and polymerase complexes, the polymerase switches mode and catalyzes the synthesis of complementary minus-strands. This chain is RNA-directed RNA polymerase VP2 (S2), found in Aquareovirus C (isolate Golden shiner/USA/GSRV/1977) (AQRV-C).